Here is a 251-residue protein sequence, read N- to C-terminus: WUSCHEL-related homeobox 4 (251 aa).

Disordered stretches follow at residues 1-21 (MKVHEFSNGFSSSWDQHDSTS) and 33-93 (LAPK…RWNP). Positions 11–21 (SSSWDQHDSTS) are enriched in low complexity. Residues 71–83 (KFEHKRDPPHQLE) show a composition bias toward basic and acidic residues. The homeobox; WUS-type DNA-binding region spans 86 to 150 (PGGTRWNPTQ…NHKARERQKQ (65 aa)).

The protein belongs to the WUS homeobox family. As to expression, expressed in the vasculature of the whole plant (roots, hypocotyls, cotyledons and leaves), trichomes and stomata. Expresse in the developing vascular bundles of root and shoot lateral organs.

Its subcellular location is the nucleus. Its function is as follows. Promotes differentiation and/or maintenance of the vascular procambium, the initial cells of the developing vasculature. Part of the TDIF-TDR-WOX4 signaling pathway that plays a crucial role in the maintenance of the vascular meristem organization during secondary growth. Is required for promoting the proliferation of procambial/cambial stem cells but not for repressing their commitment to xylem differentiation in response to the TDIF signal. Acts redundantly with WOX14 downstream of the TDR/PXY receptor kinase to regulate procambial cell proliferation and differentiation in vascular tissue, independently of any role in vascular. Acts as a cambium regulator in the inflorescence stem. Is required for auxin-dependent cambium stimulation in the inflorescence stem. The sequence is that of WUSCHEL-related homeobox 4 (WOX4) from Arabidopsis thaliana (Mouse-ear cress).